We begin with the raw amino-acid sequence, 194 residues long: Coiled-coil domain-containing protein 184 (194 aa).

The stretch at Gly39–Gln68 forms a coiled coil. The segment at Gly101 to Glu176 is disordered. Over residues Pro135–Lys145 the composition is skewed to acidic residues.

The polypeptide is Coiled-coil domain-containing protein 184 (CCDC184) (Homo sapiens (Human)).